Consider the following 111-residue polypeptide: Nucleoid-associated protein VF_1686 (111 aa).

2 disordered regions span residues 1–23 (MFGG…DRMQ) and 89–111 (TQKE…KMPF).

It belongs to the YbaB/EbfC family. Homodimer.

The protein resides in the cytoplasm. It is found in the nucleoid. Binds to DNA and alters its conformation. May be involved in regulation of gene expression, nucleoid organization and DNA protection. This is Nucleoid-associated protein VF_1686 from Aliivibrio fischeri (strain ATCC 700601 / ES114) (Vibrio fischeri).